The sequence spans 671 residues: UvrABC system protein C (671 aa).

The GIY-YIG domain occupies 16–95 (VEPGVYRFRD…IKEFDPRFNV (80 aa)). In terms of domain architecture, UVR spans 208–243 (DRLARDMEREMNQAAQELNFERAARLRDNISALQRA). The tract at residues 645 to 671 (SSAPSSGATEAVLPAMVENGVDDTPST) is disordered.

The protein belongs to the UvrC family. As to quaternary structure, interacts with UvrB in an incision complex.

It localises to the cytoplasm. Its function is as follows. The UvrABC repair system catalyzes the recognition and processing of DNA lesions. UvrC both incises the 5' and 3' sides of the lesion. The N-terminal half is responsible for the 3' incision and the C-terminal half is responsible for the 5' incision. The polypeptide is UvrABC system protein C (Mycobacteroides abscessus (strain ATCC 19977 / DSM 44196 / CCUG 20993 / CIP 104536 / JCM 13569 / NCTC 13031 / TMC 1543 / L948) (Mycobacterium abscessus)).